A 455-amino-acid chain; its full sequence is Venom prothrombin activator hopsarin-D (455 aa).

The N-terminal stretch at 1–20 (MAPQLLLCLILTFLWSVPEA) is a signal peptide. Residues 21–40 (ESNVFLKSKVANRFLQRTKR) constitute a propeptide that is removed on maturation. Residues 41-86 (SNSLFEEIRPGNIERECIEEKCSKEEAREVFEDNEKTETFWNVYVD) enclose the Gla domain. E46, E47, E54, E56, E59, E60, E65, E66, E69, E72, and E75 each carry 4-carboxyglutamate. C57 and C62 form a disulfide bridge. One can recognise an EGF-like 1; calcium-binding domain in the interval 86–121 (DGDQCSSNPCHYHGTCKDGIGSYTCTCLPNYEGKNC). 10 disulfide bridges follow: C90–C101, C95–C110, C112–C121, C129–C140, C136–C149, C151–C164, C172–C328, C236–C252, C376–C390, and C401–C429. S92 carries O-linked (Hex...) serine glycosylation. The region spanning 129 to 164 (CRAFNGNCWHFCKRVQSETQCSCAESYRLGVDGHSC) is the EGF-like 2 domain. Residues 182–209 (REASLPDFVQSQKATLLKKSDNPSPDIR) constitute a propeptide, activation peptide. Positions 210 to 453 (IVNGMDSKLG…FIPWIKKIMS (244 aa)) constitute a Peptidase S1 domain. The active-site Charge relay system is H251. Residue N254 is glycosylated (N-linked (GlcNAc...) asparagine). The active-site Charge relay system is the D308. The Charge relay system role is filled by S405.

This sequence belongs to the peptidase S1 family. Snake venom subfamily. Heterodimer of a light chain and a heavy chain; disulfide-linked. In terms of processing, the vitamin K-dependent, enzymatic carboxylation of some glutamate residues allows the modified protein to bind calcium. As to expression, expressed by the venom gland.

It is found in the secreted. It carries out the reaction Selective cleavage of Arg-|-Thr and then Arg-|-Ile bonds in prothrombin to form thrombin.. Snake prothrombin activator that attacks the hemostatic system of prey. This protein is functionally similar to blood coagulation factor Xa. The procoagulant activity of hopsarin-D is approximately 10-fold lower than that of trocarin-D and FXa. This Hoplocephalus stephensii (Stephens's banded snake) protein is Venom prothrombin activator hopsarin-D.